The primary structure comprises 627 residues: DEAD-box ATP-dependent RNA helicase 35A (627 aa).

Composition is skewed to low complexity over residues 1–15 and 52–61; these read MAAA…AAAA and SSSAAEAASD. Disordered stretches follow at residues 1–23 and 40–85; these read MAAA…EDNY and LRRL…LEAS. Residues 62-72 are compositionally biased toward pro residues; that stretch reads LPPPPPPPPNQ. The Q motif signature appears at 182–210; that stretch reads RDFRDLRLPEPMLRKLREKGIVQPTPIQV. In terms of domain architecture, Helicase ATP-binding spans 213–397; sequence LPVVLSGRDM…KSALVKPVIV (185 aa). 226–233 lines the ATP pocket; sequence AFTGSGKT. The DEAD box signature appears at 345–348; that stretch reads DEAD. One can recognise a Helicase C-terminal domain in the interval 408–568; the sequence is DVIQEVEYVK…RIPPVLAELN (161 aa). The CCHC-type zinc finger occupies 584–601; it reads KGCAYCGGLGHRVTDCPK.

It belongs to the DEAD box helicase family. DDX41 subfamily.

It catalyses the reaction ATP + H2O = ADP + phosphate + H(+). This chain is DEAD-box ATP-dependent RNA helicase 35A, found in Oryza sativa subsp. japonica (Rice).